Here is a 162-residue protein sequence, read N- to C-terminus: uncharacterized protein (162 aa).

Residues 1–23 (MLSLKSPAVLLSMVILVPLFALA) form the signal peptide.

This is an uncharacterized protein from Mycosarcoma maydis (Corn smut fungus).